We begin with the raw amino-acid sequence, 330 residues long: Beta-ketoacyl-[acyl-carrier-protein] synthase III (330 aa).

Residues C115 and H255 contribute to the active site. The interval Q256–R260 is ACP-binding. N285 is an active-site residue.

This sequence belongs to the thiolase-like superfamily. FabH family. As to quaternary structure, homodimer.

It localises to the cytoplasm. The catalysed reaction is malonyl-[ACP] + acetyl-CoA + H(+) = 3-oxobutanoyl-[ACP] + CO2 + CoA. It participates in lipid metabolism; fatty acid biosynthesis. In terms of biological role, catalyzes the condensation reaction of fatty acid synthesis by the addition to an acyl acceptor of two carbons from malonyl-ACP. Catalyzes the first condensation reaction which initiates fatty acid synthesis and may therefore play a role in governing the total rate of fatty acid production. Possesses both acetoacetyl-ACP synthase and acetyl transacylase activities. Its substrate specificity determines the biosynthesis of branched-chain and/or straight-chain of fatty acids. In Symbiobacterium thermophilum (strain DSM 24528 / JCM 14929 / IAM 14863 / T), this protein is Beta-ketoacyl-[acyl-carrier-protein] synthase III.